A 443-amino-acid polypeptide reads, in one-letter code: Protein translocase subunit SecY (443 aa).

10 helical membrane-spanning segments follow: residues 24–44 (LFVI…IPGI), 77–97 (IFAL…LLTV), 125–145 (LVLA…MPGM), 154–174 (FAFY…LMWL), 183–203 (IGNG…PPAI), 217–237 (FLVL…VVFV), 274–294 (VIPA…ASWF), 317–337 (YVLL…ALVF), 370–390 (MTRL…IPEF), and 397–417 (VPFY…MDFM).

This sequence belongs to the SecY/SEC61-alpha family. As to quaternary structure, component of the Sec protein translocase complex. Heterotrimer consisting of SecY, SecE and SecG subunits. The heterotrimers can form oligomers, although 1 heterotrimer is thought to be able to translocate proteins. Interacts with the ribosome. Interacts with SecDF, and other proteins may be involved. Interacts with SecA.

Its subcellular location is the cell inner membrane. Its function is as follows. The central subunit of the protein translocation channel SecYEG. Consists of two halves formed by TMs 1-5 and 6-10. These two domains form a lateral gate at the front which open onto the bilayer between TMs 2 and 7, and are clamped together by SecE at the back. The channel is closed by both a pore ring composed of hydrophobic SecY resides and a short helix (helix 2A) on the extracellular side of the membrane which forms a plug. The plug probably moves laterally to allow the channel to open. The ring and the pore may move independently. The chain is Protein translocase subunit SecY from Escherichia coli O157:H7.